We begin with the raw amino-acid sequence, 514 residues long: Peptide chain release factor 3 (514 aa).

The tr-type G domain occupies 8–268 (KKRRTFAIIS…IFLKFAPEPH (261 aa)). GTP-binding positions include 17–24 (SHPDAGKT), 85–89 (DTPGH), and 139–142 (NKLD).

It belongs to the TRAFAC class translation factor GTPase superfamily. Classic translation factor GTPase family. PrfC subfamily.

The protein localises to the cytoplasm. Its function is as follows. Increases the formation of ribosomal termination complexes and stimulates activities of RF-1 and RF-2. It binds guanine nucleotides and has strong preference for UGA stop codons. It may interact directly with the ribosome. The stimulation of RF-1 and RF-2 is significantly reduced by GTP and GDP, but not by GMP. This chain is Peptide chain release factor 3, found in Streptococcus pneumoniae (strain P1031).